The chain runs to 41 residues: uncharacterized protein (41 aa).

Basic and acidic residues predominate over residues 1–12; sequence MTRNVVRQEFEA. Residues 1-23 form a disordered region; the sequence is MTRNVVRQEFEAPGKPQDSSQQD.

This is an uncharacterized protein from Homo sapiens (Human).